Reading from the N-terminus, the 266-residue chain is 2-hydroxyisocaproyl-CoA dehydratase activator (266 aa).

Residues serine 10 to lysine 14 and glycine 102 to aspartate 104 each bind ATP. Position 125 (cysteine 125) interacts with [4Fe-4S] cluster. Aspartate 134 provides a ligand contact to ATP. A [4Fe-4S] cluster-binding site is contributed by cysteine 164. Glycine 215 and glutamine 241 together coordinate ATP.

It belongs to the HadI activator family. In terms of assembly, homodimer. The cofactor is [4Fe-4S] cluster.

Functionally, involved in the reductive branch of L-leucine fermentation. Required for the activation of (R)-2-hydroxyisocaproyl-CoA dehydratase. The reduced activator transfers one electron to the dehydratase concomitant with hydrolysis of ATP. This protein is extremely sensitive towards oxygen. The polypeptide is 2-hydroxyisocaproyl-CoA dehydratase activator (Clostridioides difficile (Peptoclostridium difficile)).